The sequence spans 949 residues: Protocadherin alpha-11 (949 aa).

The first 29 residues, 1-29 (MFGFQRRGLGTPRLQLWLLLLEFWEVGSG), serve as a signal peptide directing secretion. Cadherin domains lie at 30–133 (QLHY…PPVF), 157–242 (ASDA…DPEF), 243–349 (DKSE…SPEV), 350–454 (AVTS…APAF), 455–564 (AQPE…APAL), and 580–677 (VPRS…APKA). The Extracellular segment spans residues 30-696 (QLHYSVSEEA…SPEAALVDVN (667 aa)). Residues Asn-265 and Asn-304 are each glycosylated (N-linked (GlcNAc...) asparagine). A glycan (N-linked (GlcNAc...) asparagine) is linked at Asn-547. A helical membrane pass occupies residues 697–717 (VYLIIAICVVSSLLVLTLLLY). Over 718–949 (TALWWSATPT…GNSTTDNSDQ (232 aa)) the chain is Cytoplasmic. 2 PXXP repeats span residues 733-736 (PGKP) and 773-776 (PSLP). The interval 733–893 (PGKPTLVCSR…PDKFIIPGSP (161 aa)) is 6 X 4 AA repeats of P-X-X-P. 2 disordered regions span residues 753-807 (RRQR…DWRY) and 826-949 (ILRA…NSDQ). The segment covering 780–789 (NKEEEGERQE) has biased composition (basic and acidic residues). 4 PXXP repeats span residues 795–798 (PGQP), 831–834 (PGGP), 872–875 (PGNP), and 890–893 (PGSP). The segment covering 908 to 922 (DKSDFITFGKKEETK) has biased composition (basic and acidic residues).

Its subcellular location is the cell membrane. Its function is as follows. Potential calcium-dependent cell-adhesion protein. May be involved in the establishment and maintenance of specific neuronal connections in the brain. This is Protocadherin alpha-11 (PCDHA11) from Homo sapiens (Human).